The following is a 380-amino-acid chain: Cytochrome b (380 aa).

Helical transmembrane passes span 34–54 (FGSL…LLAM), 78–99 (WLIR…YLHI), 114–134 (WNTG…GYVL), and 179–199 (FFAL…IHLT). His-84 and His-98 together coordinate heme b. Heme b-binding residues include His-183 and His-197. His-202 serves as a coordination point for a ubiquinone. The next 4 membrane-spanning stretches (helical) occupy residues 227 to 247 (LKDI…ALFS), 289 to 309 (LGGV…PLLH), 321 to 341 (LSQL…WIGS), and 348 to 368 (FIII…ILFP).

The protein belongs to the cytochrome b family. The cytochrome bc1 complex contains 11 subunits: 3 respiratory subunits (MT-CYB, CYC1 and UQCRFS1), 2 core proteins (UQCRC1 and UQCRC2) and 6 low-molecular weight proteins (UQCRH/QCR6, UQCRB/QCR7, UQCRQ/QCR8, UQCR10/QCR9, UQCR11/QCR10 and a cleavage product of UQCRFS1). This cytochrome bc1 complex then forms a dimer. It depends on heme b as a cofactor.

It is found in the mitochondrion inner membrane. Functionally, component of the ubiquinol-cytochrome c reductase complex (complex III or cytochrome b-c1 complex) that is part of the mitochondrial respiratory chain. The b-c1 complex mediates electron transfer from ubiquinol to cytochrome c. Contributes to the generation of a proton gradient across the mitochondrial membrane that is then used for ATP synthesis. The polypeptide is Cytochrome b (MT-CYB) (Oceanodroma microsoma (Least storm petrel)).